Reading from the N-terminus, the 361-residue chain is Protein Wnt-2 (361 aa).

The first 27 residues, 1 to 27, serve as a signal peptide directing secretion; it reads MNASVLGLCLSGPLVLLLAWLAPPVTS. 11 disulfide bridges follow: Cys-77/Cys-88, Cys-128/Cys-136, Cys-138/Cys-158, Cys-207/Cys-221, Cys-209/Cys-216, Cys-279/Cys-310, Cys-295/Cys-305, Cys-309/Cys-349, Cys-325/Cys-340, Cys-327/Cys-337, and Cys-332/Cys-333. Ser-213 carries the O-palmitoleoyl serine; by PORCN lipid modification. Asn-296 carries an N-linked (GlcNAc...) asparagine glycan.

The protein belongs to the Wnt family. Post-translationally, palmitoleoylation is required for efficient binding to frizzled receptors. Depalmitoleoylation leads to Wnt signaling pathway inhibition.

It is found in the secreted. The protein localises to the extracellular space. It localises to the extracellular matrix. Ligand for members of the frizzled family of seven transmembrane receptors. Probable developmental protein. May be a signaling molecule which affects the development of discrete regions of tissues. Is likely to signal over only few cell diameters. The sequence is that of Protein Wnt-2 (WNT2) from Ornithorhynchus anatinus (Duckbill platypus).